A 275-amino-acid chain; its full sequence is Lectin (275 aa).

A signal peptide spans 1 to 30; it reads MASLQTQMISFYLIFLSILLTTIFFFKVNS. Positions 111 and 129 each coordinate D-glucose. Mn(2+)-binding residues include glutamate 149 and aspartate 151. Positions 151, 153, 155, and 159 each coordinate Ca(2+). 2 residues coordinate Mn(2+): aspartate 159 and histidine 166. Residues 211–217 constitute a propeptide that is removed on maturation; that stretch reads NSLEEEN. Residues glycine 246 and alanine 247 each contribute to the D-glucose site. Residues 270–275 constitute a propeptide that is removed on maturation; the sequence is KQAADA.

The protein belongs to the leguminous lectin family. In terms of assembly, heterotetramer of two alpha and two beta chains. The mature form consists of two chains, alpha and beta, produced by cleavage of the immature protein. These remain cleaved, yet fold together to form one subunit.

Functionally, D-mannose specific lectin. The protein is Lectin of Lens culinaris (Lentil).